Consider the following 444-residue polypeptide: Putative dipeptidase CPC735_015490 (444 aa).

Positions 1 to 34 (MSQRTEHNGSWLRNAGSLLSVLACVAVLASPASA) are cleaved as a signal peptide. Residues histidine 67, aspartate 69, and glutamate 178 each coordinate Zn(2+). Cysteine 118 and cysteine 207 form a disulfide bridge. Substrate is bound at residue histidine 205. Histidine 250 and histidine 271 together coordinate Zn(2+). Residues arginine 282 and aspartate 342 each contribute to the substrate site. Asparagine 413 is a glycosylation site (N-linked (GlcNAc...) asparagine).

The protein belongs to the metallo-dependent hydrolases superfamily. Peptidase M19 family. The cofactor is Zn(2+).

The catalysed reaction is an L-aminoacyl-L-amino acid + H2O = 2 an L-alpha-amino acid. Hydrolyzes a wide range of dipeptides. The sequence is that of Putative dipeptidase CPC735_015490 from Coccidioides posadasii (strain C735) (Valley fever fungus).